The chain runs to 396 residues: Initiation-specific alpha-1,6-mannosyltransferase (396 aa).

Residues 1–7 (MLRLRLR) lie on the Cytoplasmic side of the membrane. Residues 8-28 (SIVIGAAIAGSILLLFNHGSI) traverse the membrane as a helical; Signal-anchor for type II membrane protein segment. The Lumenal segment spans residues 29 to 396 (EGMEDLTEIS…HFFAGSWKDD (368 aa)). The DXD motif motif lies at 229 to 231 (DID). The N-linked (GlcNAc...) asparagine glycan is linked to asparagine 345.

The protein belongs to the glycosyltransferase 32 family. Mn(2+) is required as a cofactor.

It is found in the endoplasmic reticulum membrane. It localises to the golgi apparatus membrane. It carries out the reaction Transfers an alpha-D-mannosyl residue from GDP-mannose into lipid-linked oligosaccharide, forming an alpha-(1-&gt;6)-D-mannosyl-D-mannose linkage.. Its function is as follows. Mannosyltransferase involved in outer chain elongation of asparagine-linked oligosaccharides of the type Man(9)GlcNAc(2). May otherwise add the first alpha-1,6-mannose to the Man(8)GlcNAc(2) core oligosaccharide from the ER. Represents the first enzymatic event required for synthesis of outer chain mannose linkages on yeast secretory proteins. The polypeptide is Initiation-specific alpha-1,6-mannosyltransferase (Schizosaccharomyces pombe (strain 972 / ATCC 24843) (Fission yeast)).